A 530-amino-acid chain; its full sequence is Serendipity locus protein alpha (530 aa).

As to expression, transient expression in blastoderm from nuclear cycle 11 to the onset of gastrulation.

The protein localises to the cytoplasm. The protein resides in the cell membrane. Its function is as follows. Required for the cellularization of the syncytial blastoderm embryo. Involved in the localization of the actin filaments just prior to and during plasma membrane invagination. Sry-alpha together with nullo and bnk may provide auxiliary functions, by acting both to stabilize a large and dynamic microfilament structure and regulate its functions. This chain is Serendipity locus protein alpha (Sry-alpha), found in Drosophila melanogaster (Fruit fly).